The primary structure comprises 295 residues: ATP synthase gamma chain (295 aa).

The protein belongs to the ATPase gamma chain family. In terms of assembly, F-type ATPases have 2 components, CF(1) - the catalytic core - and CF(0) - the membrane proton channel. CF(1) has five subunits: alpha(3), beta(3), gamma(1), delta(1), epsilon(1). CF(0) has three main subunits: a, b and c.

It localises to the cell inner membrane. Functionally, produces ATP from ADP in the presence of a proton gradient across the membrane. The gamma chain is believed to be important in regulating ATPase activity and the flow of protons through the CF(0) complex. The chain is ATP synthase gamma chain from Chlorobium phaeobacteroides (strain BS1).